A 259-amino-acid chain; its full sequence is Thiazole synthase (259 aa).

The active-site Schiff-base intermediate with DXP is the lysine 95. 1-deoxy-D-xylulose 5-phosphate is bound by residues glycine 156, 182–183 (AG), and 204–205 (AS).

The protein belongs to the ThiG family. As to quaternary structure, homotetramer. Forms heterodimers with either ThiH or ThiS.

Its subcellular location is the cytoplasm. The catalysed reaction is [ThiS sulfur-carrier protein]-C-terminal-Gly-aminoethanethioate + 2-iminoacetate + 1-deoxy-D-xylulose 5-phosphate = [ThiS sulfur-carrier protein]-C-terminal Gly-Gly + 2-[(2R,5Z)-2-carboxy-4-methylthiazol-5(2H)-ylidene]ethyl phosphate + 2 H2O + H(+). It participates in cofactor biosynthesis; thiamine diphosphate biosynthesis. Its function is as follows. Catalyzes the rearrangement of 1-deoxy-D-xylulose 5-phosphate (DXP) to produce the thiazole phosphate moiety of thiamine. Sulfur is provided by the thiocarboxylate moiety of the carrier protein ThiS. In vitro, sulfur can be provided by H(2)S. The polypeptide is Thiazole synthase (Corynebacterium efficiens (strain DSM 44549 / YS-314 / AJ 12310 / JCM 11189 / NBRC 100395)).